The chain runs to 238 residues: 1-(5-phosphoribosyl)-5-[(5-phosphoribosylamino)methylideneamino] imidazole-4-carboxamide isomerase (238 aa).

Asp8 (proton acceptor) is an active-site residue. The active-site Proton donor is Asp129.

Belongs to the HisA/HisF family.

The protein localises to the cytoplasm. It carries out the reaction 1-(5-phospho-beta-D-ribosyl)-5-[(5-phospho-beta-D-ribosylamino)methylideneamino]imidazole-4-carboxamide = 5-[(5-phospho-1-deoxy-D-ribulos-1-ylimino)methylamino]-1-(5-phospho-beta-D-ribosyl)imidazole-4-carboxamide. Its pathway is amino-acid biosynthesis; L-histidine biosynthesis; L-histidine from 5-phospho-alpha-D-ribose 1-diphosphate: step 4/9. The polypeptide is 1-(5-phosphoribosyl)-5-[(5-phosphoribosylamino)methylideneamino] imidazole-4-carboxamide isomerase (Myxococcus xanthus (strain DK1622)).